A 430-amino-acid polypeptide reads, in one-letter code: Serine hydroxymethyltransferase (430 aa).

Position 120–122 (120–122 (GHI)) interacts with (6S)-5,6,7,8-tetrahydrofolate. Position 226 is an N6-(pyridoxal phosphate)lysine (K226).

It belongs to the SHMT family. As to quaternary structure, homodimer. Requires pyridoxal 5'-phosphate as cofactor.

It is found in the cytoplasm. Its pathway is amino-acid biosynthesis; glycine biosynthesis; glycine from L-serine: step 1/1. Its function is as follows. Catalyzes the reversible interconversion of serine and glycine with a modified folate serving as the one-carbon carrier. Also exhibits a pteridine-independent aldolase activity toward beta-hydroxyamino acids, producing glycine and aldehydes, via a retro-aldol mechanism. The sequence is that of Serine hydroxymethyltransferase from Pyrobaculum neutrophilum (strain DSM 2338 / JCM 9278 / NBRC 100436 / V24Sta) (Thermoproteus neutrophilus).